Reading from the N-terminus, the 264-residue chain is Signal peptidase I (264 aa).

At 1–18 (MNRDNINSNKTVKQEFGS) the chain is on the cytoplasmic side. A helical transmembrane segment spans residues 19 to 39 (FAFVICIALVIRILIMEPFTV). Topologically, residues 40–264 (PTGSMKATIL…IFKNLYNVDE (225 aa)) are extracellular. Residues Ser43 and Lys106 contribute to the active site.

This sequence belongs to the peptidase S26 family.

Its subcellular location is the cell membrane. It catalyses the reaction Cleavage of hydrophobic, N-terminal signal or leader sequences from secreted and periplasmic proteins.. This chain is Signal peptidase I (lepB), found in Rickettsia prowazekii (strain Madrid E).